The primary structure comprises 142 residues: NCT transcriptional regulatory complex subunit B (142 aa).

It belongs to the NC2 beta/DR1 family. Forms the NCT transcriptional regulatory complex with nctA and mot1.

The protein localises to the nucleus. Its function is as follows. Part of the NCT transcriptional regulatory complex that acts as a key regulator of ergosterol biosynthesis and the azole exporter cdr1B. The NCT complex binds the promoters of genes linked to azole susceptibility, and especially represses the expression of cdr1B transporter. The sequence is that of NCT transcriptional regulatory complex subunit B from Aspergillus fumigatus (strain CBS 144.89 / FGSC A1163 / CEA10) (Neosartorya fumigata).